The sequence spans 242 residues: 7-cyano-7-deazaguanine synthase (242 aa).

Position 12 to 22 (12 to 22 (FSGGQDSTTCL)) interacts with ATP. Cysteine 200, cysteine 215, cysteine 218, and cysteine 221 together coordinate Zn(2+).

It belongs to the QueC family. The cofactor is Zn(2+).

It carries out the reaction 7-carboxy-7-deazaguanine + NH4(+) + ATP = 7-cyano-7-deazaguanine + ADP + phosphate + H2O + H(+). It participates in purine metabolism; 7-cyano-7-deazaguanine biosynthesis. Functionally, catalyzes the ATP-dependent conversion of 7-carboxy-7-deazaguanine (CDG) to 7-cyano-7-deazaguanine (preQ(0)). The protein is 7-cyano-7-deazaguanine synthase of Nitratidesulfovibrio vulgaris (strain ATCC 29579 / DSM 644 / CCUG 34227 / NCIMB 8303 / VKM B-1760 / Hildenborough) (Desulfovibrio vulgaris).